The sequence spans 213 residues: Adenylate kinase (213 aa).

10 to 15 (GSGKGT) lines the ATP pocket. Residues 30-59 (SVGDLLRNIISSESKLGKGIKDTVESGNLI) form an NMP region. AMP contacts are provided by residues arginine 36, 57 to 59 (NLI), 83 to 86 (GFPR), and glutamine 90. The interval 125-160 (DRLTCLDCKSIYSISSFKNTTCAKCKSTRLEKRIDD) is LID. Arginine 126 provides a ligand contact to ATP. Zn(2+) is bound by residues cysteine 129 and cysteine 132. 135–136 (IY) contacts ATP. Cysteine 146 and cysteine 149 together coordinate Zn(2+). Residues arginine 157 and arginine 169 each coordinate AMP. Leucine 195 contributes to the ATP binding site.

It belongs to the adenylate kinase family. In terms of assembly, monomer.

The protein localises to the cytoplasm. It carries out the reaction AMP + ATP = 2 ADP. It participates in purine metabolism; AMP biosynthesis via salvage pathway; AMP from ADP: step 1/1. Catalyzes the reversible transfer of the terminal phosphate group between ATP and AMP. Plays an important role in cellular energy homeostasis and in adenine nucleotide metabolism. This chain is Adenylate kinase, found in Wolbachia pipientis subsp. Culex pipiens (strain wPip).